Reading from the N-terminus, the 328-residue chain is Reticulocalbin-3 (328 aa).

The N-terminal stretch at 1 to 20 (MMWRWTLMLLLLLLRHWALG) is a signal peptide. The tract at residues 24–48 (PDAGPHGQDRVHHGTPLSEAPHDDA) is disordered. 6 consecutive EF-hand domains span residues 75 to 112 (ESQARLGRIVDRMDLAGDSDGWVSLAELRAWIAHTQQR), 113 to 148 (HIRDSVSAAWHTYDTDRDGRVGWEELRNATYGHYEP), 163 to 198 (KMLARDERRFRVADQDGDSMATREELTAFLHPEEFP), 200 to 235 (MRDIVVAETLEDLDKNKDGYVQVEEYIADLYSAEPG), 241 to 276 (WVQTERQQFRDFRDLNKDGRLDGSEVGYWVLPPSQD), and 277 to 312 (QPLVEANHLLHESDTDKDGRLSKAEILSNWNMFVGS). Residues aspartate 92, aspartate 94, tryptophan 96, glutamate 101, aspartate 126, aspartate 128, aspartate 130, arginine 132, and glutamate 137 each coordinate Ca(2+). N-linked (GlcNAc...) asparagine glycosylation is present at asparagine 140. Ca(2+) contacts are provided by aspartate 176, aspartate 178, aspartate 180, methionine 182, glutamate 187, aspartate 213, asparagine 215, aspartate 217, tyrosine 219, glutamate 224, aspartate 254, asparagine 256, aspartate 258, arginine 260, glutamate 265, aspartate 290, aspartate 292, aspartate 294, arginine 296, and glutamate 301. A Prevents secretion from ER motif is present at residues 325-328 (HDEL).

The protein belongs to the CREC family. Interacts with PCSK6 (immature form including the propeptide); probably involved in the maturation and the secretion of PCSK6. Post-translationally, N-glycosylated. Degraded by PCSK6 and other endoproteases including FURIN and PCSK5.

It localises to the endoplasmic reticulum lumen. Its function is as follows. Probable molecular chaperone assisting protein biosynthesis and transport in the endoplasmic reticulum. Required for the proper biosynthesis and transport of pulmonary surfactant-associated protein A/SP-A, pulmonary surfactant-associated protein D/SP-D and the lipid transporter ABCA3. By regulating both the proper expression and the degradation through the endoplasmic reticulum-associated protein degradation pathway of these proteins plays a crucial role in pulmonary surfactant homeostasis. Has an anti-fibrotic activity by negatively regulating the secretion of type I and type III collagens. This calcium-binding protein also transiently associates with immature PCSK6 and regulates its secretion. The polypeptide is Reticulocalbin-3 (Rattus norvegicus (Rat)).